The sequence spans 311 residues: Protoheme IX farnesyltransferase (311 aa).

9 helical membrane passes run 32 to 52 (VMSL…VSIN), 53 to 73 (PWYG…AGVL), 104 to 124 (FVFG…FINW), 125 to 145 (FAAL…TIWL), 153 to 173 (IVIG…AATG), 180 to 200 (FLLF…LSLF), 224 to 244 (KQIL…FIID), 245 to 265 (FAGI…IYFA), and 290 to 310 (FYLA…YFII).

It belongs to the UbiA prenyltransferase family. Protoheme IX farnesyltransferase subfamily.

It is found in the cell inner membrane. It catalyses the reaction heme b + (2E,6E)-farnesyl diphosphate + H2O = Fe(II)-heme o + diphosphate. It participates in porphyrin-containing compound metabolism; heme O biosynthesis; heme O from protoheme: step 1/1. Converts heme B (protoheme IX) to heme O by substitution of the vinyl group on carbon 2 of heme B porphyrin ring with a hydroxyethyl farnesyl side group. The polypeptide is Protoheme IX farnesyltransferase (Bartonella quintana (strain Toulouse) (Rochalimaea quintana)).